We begin with the raw amino-acid sequence, 508 residues long: MGLPWYRVHTVVLNDPGRLLSVHIMHTALVAGWAGSMALYELAVFDPSDPVLDPMWRQGMFVIPFMTRLGITNSWGGWNITGGTITNPGLWSYEGVAGAHIVFSGLCFLAAIWHWVYWDLEIFCDERTGKPSLDLPKIFGIHLFLSGVACFGFGAFHVTGLYGPGIWVSDPYGLTGKVQPVNPAWGVEGFDPFVPGGIASHHIAAGTLGILAGLFHLSVRPPQRLYKGLRMGNIETVLSSSIAAVFFAAFVVAGTMWYGSATTPIELFGPTRYQWDQGYFQQEIYRRVSAGLAENQSLSEAWSKIPEKLAFYDYIGNNPAKGGLFRAGSMDNGDGIAVGWLGHPVFRNKEGRELFVRRMPTFFETFPVVLVDGDGIVRADVPFRRAESKYSVEQVGVTVEFYGGELNGVSYSDPATVKKYARRAQLGEIFELDRATLKSDGVFRSSPRGWFTFGHASFALLFFFGHIWHGARTLFRDVFAGIDPDLDAQVEFGAFQKLGDPTTKRQAV.

6 helical membrane-spanning segments follow: residues 21–36 (SVHIMHTALVAGWAGS), 101–115 (IVFSGLCFLAAIWHW), 140–156 (GIHLFLSGVACFGFGAF), 203–218 (IAAGTLGILAGLFHLS), 237–252 (VLSSSIAAVFFAAFVV), and 457–472 (SFALLFFFGHIWHGAR).

Belongs to the PsbB/PsbC family. PsbB subfamily. PSII is composed of 1 copy each of membrane proteins PsbA, PsbB, PsbC, PsbD, PsbE, PsbF, PsbH, PsbI, PsbJ, PsbK, PsbL, PsbM, PsbT, PsbX, PsbY, PsbZ, Psb30/Ycf12, at least 3 peripheral proteins of the oxygen-evolving complex and a large number of cofactors. It forms dimeric complexes. Binds multiple chlorophylls. PSII binds additional chlorophylls, carotenoids and specific lipids. is required as a cofactor.

Its subcellular location is the plastid. The protein resides in the chloroplast thylakoid membrane. Functionally, one of the components of the core complex of photosystem II (PSII). It binds chlorophyll and helps catalyze the primary light-induced photochemical processes of PSII. PSII is a light-driven water:plastoquinone oxidoreductase, using light energy to abstract electrons from H(2)O, generating O(2) and a proton gradient subsequently used for ATP formation. This Barbarea verna (Land cress) protein is Photosystem II CP47 reaction center protein.